The following is a 194-amino-acid chain: ATP-dependent Clp protease proteolytic subunit (194 aa).

Catalysis depends on S97, which acts as the Nucleophile. The active site involves H122.

Belongs to the peptidase S14 family. Fourteen ClpP subunits assemble into 2 heptameric rings which stack back to back to give a disk-like structure with a central cavity, resembling the structure of eukaryotic proteasomes.

It is found in the cytoplasm. It catalyses the reaction Hydrolysis of proteins to small peptides in the presence of ATP and magnesium. alpha-casein is the usual test substrate. In the absence of ATP, only oligopeptides shorter than five residues are hydrolyzed (such as succinyl-Leu-Tyr-|-NHMec, and Leu-Tyr-Leu-|-Tyr-Trp, in which cleavage of the -Tyr-|-Leu- and -Tyr-|-Trp bonds also occurs).. In terms of biological role, cleaves peptides in various proteins in a process that requires ATP hydrolysis. Has a chymotrypsin-like activity. Plays a major role in the degradation of misfolded proteins. The protein is ATP-dependent Clp protease proteolytic subunit of Lactobacillus delbrueckii subsp. bulgaricus (strain ATCC BAA-365 / Lb-18).